The primary structure comprises 318 residues: NADH-ubiquinone oxidoreductase chain 1 (318 aa).

A run of 8 helical transmembrane segments spans residues 3–23, 69–89, 102–122, 144–164, 171–191, 222–242, 253–273, and 294–314; these read LINL…LTLL, MLFI…WTPL, MLFI…SGWA, VTLA…TLLS, YIWL…STLA, LFFL…IILF, ELYT…FLWI, and LPLT…LAGI.

Belongs to the complex I subunit 1 family. Core subunit of respiratory chain NADH dehydrogenase (Complex I) which is composed of 45 different subunits.

It localises to the mitochondrion inner membrane. The catalysed reaction is a ubiquinone + NADH + 5 H(+)(in) = a ubiquinol + NAD(+) + 4 H(+)(out). Core subunit of the mitochondrial membrane respiratory chain NADH dehydrogenase (Complex I) which catalyzes electron transfer from NADH through the respiratory chain, using ubiquinone as an electron acceptor. Essential for the catalytic activity and assembly of complex I. This Murina florium (Flores tube-nosed bat) protein is NADH-ubiquinone oxidoreductase chain 1 (MT-ND1).